The following is a 660-amino-acid chain: Bifunctional polymyxin resistance protein ArnA (660 aa).

The formyltransferase ArnAFT stretch occupies residues 1–304; sequence MKAVVFAYHD…TLGLVAGARL (304 aa). His-104 functions as the Proton donor; for formyltransferase activity in the catalytic mechanism. (6R)-10-formyltetrahydrofolate contacts are provided by residues Arg-114 and 136–140; that span reads VKRAD. Residues 314 to 660 form a dehydrogenase ArnADH region; that stretch reads RRTRVLILGV…QSVEPGDAEE (347 aa). Residues Asp-347 and 368–369 each bind NAD(+); that span reads DI. Residues Ala-393, Tyr-398, and 432-433 each bind UDP-alpha-D-glucuronate; that span reads TS. Glu-434 (proton acceptor; for decarboxylase activity) is an active-site residue. Residues Arg-460, Asn-492, 526 to 535, and Tyr-613 contribute to the UDP-alpha-D-glucuronate site; that span reads KLIDGGRQKR. Arg-619 functions as the Proton donor; for decarboxylase activity in the catalytic mechanism.

In the N-terminal section; belongs to the Fmt family. UDP-L-Ara4N formyltransferase subfamily. This sequence in the C-terminal section; belongs to the NAD(P)-dependent epimerase/dehydratase family. UDP-glucuronic acid decarboxylase subfamily. In terms of assembly, homohexamer, formed by a dimer of trimers.

The catalysed reaction is UDP-alpha-D-glucuronate + NAD(+) = UDP-beta-L-threo-pentopyranos-4-ulose + CO2 + NADH. It catalyses the reaction UDP-4-amino-4-deoxy-beta-L-arabinose + (6R)-10-formyltetrahydrofolate = UDP-4-deoxy-4-formamido-beta-L-arabinose + (6S)-5,6,7,8-tetrahydrofolate + H(+). The protein operates within nucleotide-sugar biosynthesis; UDP-4-deoxy-4-formamido-beta-L-arabinose biosynthesis; UDP-4-deoxy-4-formamido-beta-L-arabinose from UDP-alpha-D-glucuronate: step 1/3. Its pathway is nucleotide-sugar biosynthesis; UDP-4-deoxy-4-formamido-beta-L-arabinose biosynthesis; UDP-4-deoxy-4-formamido-beta-L-arabinose from UDP-alpha-D-glucuronate: step 3/3. It participates in bacterial outer membrane biogenesis; lipopolysaccharide biosynthesis. Functionally, bifunctional enzyme that catalyzes the oxidative decarboxylation of UDP-glucuronic acid (UDP-GlcUA) to UDP-4-keto-arabinose (UDP-Ara4O) and the addition of a formyl group to UDP-4-amino-4-deoxy-L-arabinose (UDP-L-Ara4N) to form UDP-L-4-formamido-arabinose (UDP-L-Ara4FN). The modified arabinose is attached to lipid A and is required for resistance to polymyxin and cationic antimicrobial peptides. The sequence is that of Bifunctional polymyxin resistance protein ArnA from Erwinia tasmaniensis (strain DSM 17950 / CFBP 7177 / CIP 109463 / NCPPB 4357 / Et1/99).